We begin with the raw amino-acid sequence, 238 residues long: 2-C-methyl-D-erythritol 4-phosphate cytidylyltransferase (238 aa).

Belongs to the IspD/TarI cytidylyltransferase family. IspD subfamily.

It carries out the reaction 2-C-methyl-D-erythritol 4-phosphate + CTP + H(+) = 4-CDP-2-C-methyl-D-erythritol + diphosphate. Its pathway is isoprenoid biosynthesis; isopentenyl diphosphate biosynthesis via DXP pathway; isopentenyl diphosphate from 1-deoxy-D-xylulose 5-phosphate: step 2/6. Its function is as follows. Catalyzes the formation of 4-diphosphocytidyl-2-C-methyl-D-erythritol from CTP and 2-C-methyl-D-erythritol 4-phosphate (MEP). In Acinetobacter baumannii (strain ATCC 17978 / DSM 105126 / CIP 53.77 / LMG 1025 / NCDC KC755 / 5377), this protein is 2-C-methyl-D-erythritol 4-phosphate cytidylyltransferase.